The chain runs to 135 residues: UPF0299 membrane protein YPK_2559 (135 aa).

A run of 3 helical transmembrane segments spans residues 30-50, 66-86, and 93-113; these read LLLPIVIPGSIIGMLILFVLL, LLIRYMALLFVPIGVGVMQYY, and FGPIVVSCFISTLIVMLVVAY.

Belongs to the UPF0299 family.

The protein localises to the cell inner membrane. In Yersinia pseudotuberculosis serotype O:3 (strain YPIII), this protein is UPF0299 membrane protein YPK_2559.